We begin with the raw amino-acid sequence, 570 residues long: D-xylulose kinase A (570 aa).

Substrate contacts are provided by histidine 95, arginine 166, aspartate 282, and asparagine 283. ATP contacts are provided by residues tryptophan 364, 469-470, and asparagine 473; that span reads GG.

It belongs to the FGGY kinase family.

The protein resides in the cytoplasm. The catalysed reaction is D-xylulose + ATP = D-xylulose 5-phosphate + ADP + H(+). Its function is as follows. Highly specific D-xylulose kinase which participates in the catabolism of xylose. Xylose is a major component of hemicelluloses such as xylan. Most fungi utilize D-xylose via three enzymatic reactions, xylose reductase (XR), xylitol dehydrogenase (XDH), and xylulokinase, to form xylulose 5-phosphate, which enters pentose phosphate pathway. The chain is D-xylulose kinase A (xkiA) from Aspergillus niger.